The sequence spans 957 residues: Glycine dehydrogenase (decarboxylating) 2 (957 aa).

An N6-(pyridoxal phosphate)lysine modification is found at Lys707.

It belongs to the GcvP family. As to quaternary structure, the glycine cleavage system is composed of four proteins: P, T, L and H. Pyridoxal 5'-phosphate serves as cofactor.

It catalyses the reaction N(6)-[(R)-lipoyl]-L-lysyl-[glycine-cleavage complex H protein] + glycine + H(+) = N(6)-[(R)-S(8)-aminomethyldihydrolipoyl]-L-lysyl-[glycine-cleavage complex H protein] + CO2. Functionally, the glycine cleavage system catalyzes the degradation of glycine. The P protein binds the alpha-amino group of glycine through its pyridoxal phosphate cofactor; CO(2) is released and the remaining methylamine moiety is then transferred to the lipoamide cofactor of the H protein. This is Glycine dehydrogenase (decarboxylating) 2 from Pseudomonas fluorescens (strain Pf0-1).